A 439-amino-acid polypeptide reads, in one-letter code: uncharacterized protein (439 aa).

Positions 1 to 22 (MWVALKRFGFLSGLLALTVLSA) are cleaved as a signal peptide. C23 carries N-palmitoyl cysteine lipidation. A lipid anchor (S-diacylglycerol cysteine) is attached at C23.

The protein belongs to the MG067/MG068/MG395 family.

It localises to the cell membrane. This is an uncharacterized protein from Mycoplasma pneumoniae (strain ATCC 29342 / M129 / Subtype 1) (Mycoplasmoides pneumoniae).